We begin with the raw amino-acid sequence, 170 residues long: Anaphase-promoting complex subunit SWM1 (170 aa).

Composition is skewed to basic and acidic residues over residues N48 to N67 and G132 to I141. Disordered stretches follow at residues N48 to E81 and L122 to I141.

Belongs to the APC13 family. In terms of assembly, the APC/C is composed of at least 13 subunits that stay tightly associated throughout the cell cycle: APC1, APC2, APC4, APC5, APC9, APC11, CDC16, CDC23, CDC26, CDC27, DOC1, MND2 and SWM1. SWM1 interacts directly with CDC23 and APC5, and is required to tether APC9, CDC16, CDC26 and CDC27 to the complex.

The protein operates within protein modification; protein ubiquitination. Component of the anaphase promoting complex/cyclosome (APC/C), a cell cycle-regulated E3 ubiquitin-protein ligase complex that controls progression through mitosis and the G1 phase of the cell cycle. The APC/C is thought to confer substrate specificity and, in the presence of ubiquitin-conjugating E2 enzymes, it catalyzes the formation of protein-ubiquitin conjugates that are subsequently degraded by the 26S proteasome. In early mitosis, the APC/C is activated by CDC20 and targets securin PDS1, the B-type cyclin CLB5, and other anaphase inhibitory proteins for proteolysis, thereby triggering the separation of sister chromatids at the metaphase-to-anaphase transition. In late mitosis and in G1, degradation of CLB5 allows activation of the APC/C by CDH1, which is needed to destroy CDC20 and the B-type cyclin CLB2 to allow exit from mitosis and creating the low CDK state necessary for cytokinesis and for reforming prereplicative complexes in G1 prior to another round of replication. SWM1 is required for APC/C activity in meiosis. The protein is Anaphase-promoting complex subunit SWM1 (SWM1) of Saccharomyces cerevisiae (strain ATCC 204508 / S288c) (Baker's yeast).